Reading from the N-terminus, the 361-residue chain is Peptide chain release factor 1 (361 aa).

At Gln-237 the chain carries N5-methylglutamine. Residues 285-296 (DEKRRSAEESTR) are compositionally biased toward basic and acidic residues. The tract at residues 285–305 (DEKRRSAEESTRRNLVSSGDR) is disordered.

This sequence belongs to the prokaryotic/mitochondrial release factor family. Methylated by PrmC. Methylation increases the termination efficiency of RF1.

The protein resides in the cytoplasm. Peptide chain release factor 1 directs the termination of translation in response to the peptide chain termination codons UAG and UAA. This chain is Peptide chain release factor 1, found in Shewanella halifaxensis (strain HAW-EB4).